The primary structure comprises 857 residues: RNA-directed RNA polymerase 2a (857 aa).

In terms of domain architecture, RdRp catalytic spans 511–624; that stretch reads KHCLEIDLSK…FSLLPPVGDP (114 aa). The disordered stretch occupies residues 782–829; it reads RRCNDKRRTPTGSYGGGEEAETKISQAESTGTRSQKSQRESAFKSQTV. Positions 804–816 are enriched in polar residues; the sequence is KISQAESTGTRSQ.

Belongs to the ssRNA positive-strand viruses RNA-directed RNA polymerase family. As to quaternary structure, interacts with replication protein 1a.

The catalysed reaction is RNA(n) + a ribonucleoside 5'-triphosphate = RNA(n+1) + diphosphate. Its function is as follows. RNA-dependent RNA polymerase which replicates the viral genome composed of 3 RNA segments, RNA1, RNA2 and RNA3. The chain is RNA-directed RNA polymerase 2a from Cucumis sativus (Cucumber).